The chain runs to 203 residues: MSHNELNLALLDVRKAYRLLADYQQRVIELLDFIKNELNAEHYYHYMDRYDSRSVYKIYTDQEAGLKLLPMRDMNLLWHRTRNIPDGEYWQNNISKDDLVFDVNIVSDEDSTLSVEESNSELHIYIYSCIKYKRNKNWYEDLWLKFDYPEFNQVSIFEDEKLGIKYQVYGEKLNLADLYDKESVKNILHGLKDRASKALNQKI.

This is an uncharacterized protein from Pasteurella multocida (strain Pm70).